A 153-amino-acid polypeptide reads, in one-letter code: Protein-export protein SecB (153 aa).

It belongs to the SecB family. In terms of assembly, homotetramer, a dimer of dimers. One homotetramer interacts with 1 SecA dimer.

It localises to the cytoplasm. Its function is as follows. One of the proteins required for the normal export of preproteins out of the cell cytoplasm. It is a molecular chaperone that binds to a subset of precursor proteins, maintaining them in a translocation-competent state. It also specifically binds to its receptor SecA. This chain is Protein-export protein SecB, found in Erwinia tasmaniensis (strain DSM 17950 / CFBP 7177 / CIP 109463 / NCPPB 4357 / Et1/99).